Here is a 427-residue protein sequence, read N- to C-terminus: MNDAARLTTDDIPGLMIDIGRRARAAGRILALAPAAARNAALLAGAAALRAEAGAIALENAKDMSAGRAKGLTDALLDRLELTPARIEAMAKGLEDIAALPDPVGTVLAGWQRPNGLRIERVRVPIGVIGVIYESRPNVTADAGALCLKAGNAAILRGGSESFNSSRAIHRCLAAGLRAAGLPEDAIQSVPTPDRAAVGMLLTMTDFIDVIVPRGGKSLIERVSAESKVPLFKHLEGLCHTYIHAKADPQKALSVTVNAKMRRTGVCGSTETILVDRAIAATILPPLLDALAKAGCALRGDEETRAFSERVGPATAEDWDTEYLDAIVSIRVVADLDEALAHIAAHSSDHTDCILTEDAAAAERFLTEVDSAIVMHNASTQFADGGEFGMGAEIGISTGRLHARGPVGVEQLTIFKYKVRGTGQTRP.

This sequence belongs to the gamma-glutamyl phosphate reductase family.

Its subcellular location is the cytoplasm. The enzyme catalyses L-glutamate 5-semialdehyde + phosphate + NADP(+) = L-glutamyl 5-phosphate + NADPH + H(+). It participates in amino-acid biosynthesis; L-proline biosynthesis; L-glutamate 5-semialdehyde from L-glutamate: step 2/2. In terms of biological role, catalyzes the NADPH-dependent reduction of L-glutamate 5-phosphate into L-glutamate 5-semialdehyde and phosphate. The product spontaneously undergoes cyclization to form 1-pyrroline-5-carboxylate. In Rhodospirillum rubrum (strain ATCC 11170 / ATH 1.1.1 / DSM 467 / LMG 4362 / NCIMB 8255 / S1), this protein is Gamma-glutamyl phosphate reductase.